A 148-amino-acid polypeptide reads, in one-letter code: Early glycoprotein GP48 (148 aa).

The first 21 residues, 1–21, serve as a signal peptide directing secretion; sequence MMLRAWRLMVLLAAYCYYVFA. Residues N22, N44, N49, N57, N65, N104, N108, N118, N135, and N144 are each glycosylated (N-linked (GlcNAc...) asparagine; by host).

Belongs to the RL11 family. N-glycosylated and possibly O-glycosylated.

Its subcellular location is the virion membrane. This chain is Early glycoprotein GP48 (UL4), found in Homo sapiens (Human).